The primary structure comprises 859 residues: Cation/H(+) antiporter 24 (859 aa).

Helical transmembrane passes span 64–84 (AFSTFLIEAIIIIFFIKVVSI), 92–112 (PRIVSEIIGGMMIGPSMFGGI), 122–142 (PIANYICANIGLMGFFYFLFL), 161–181 (YIAAIGVIVPIICVGSVGMAM), 194–214 (SIGGVVFALSFTSFPVIYTVL), 227–247 (FAMSVALLGDMAGVYVIVIFE), 258–278 (YSVFWFLVSVVIFAAFMLLVV), 291–311 (EGTLVNQNYIVMILMGVLASC), 312–332 (FLTDMFGLSIAVGPIWLGLLV), 348–368 (TFIYEFLMPFTYALVGQGTNI), 384–404 (FYMTVVGFITKFLSTAFAALF), and 438–458 (IVGFPGYTVMVLHTVVVTAVT). Residues 538-566 (IDHEQRKEEEEEEYEEEEEEPERKQSGRI) form a disordered region. Over residues 546–557 (EEEEEYEEEEEE) the composition is skewed to acidic residues. A Phosphoserine modification is found at Ser-857.

It belongs to the monovalent cation:proton antiporter 2 (CPA2) transporter (TC 2.A.37) family. CHX (TC 2.A.37.4) subfamily. Specifically expressed in pollen.

The protein localises to the membrane. May operate as a cation/H(+) antiporter. The protein is Cation/H(+) antiporter 24 (CHX24) of Arabidopsis thaliana (Mouse-ear cress).